Consider the following 342-residue polypeptide: Oxygen-dependent coproporphyrinogen-III oxidase (342 aa).

Residue S98 coordinates substrate. A divalent metal cation-binding residues include H102 and H112. H112 acts as the Proton donor in catalysis. Residue 114 to 116 (NYR) participates in substrate binding. A divalent metal cation contacts are provided by H146 and H176. Positions 266–301 (YVEFNLVWDRGTIFGLQTNGRTESILMSLPPLARWE) are important for dimerization.

The protein belongs to the aerobic coproporphyrinogen-III oxidase family. Homodimer. It depends on a divalent metal cation as a cofactor.

The protein localises to the cytoplasm. The catalysed reaction is coproporphyrinogen III + O2 + 2 H(+) = protoporphyrinogen IX + 2 CO2 + 2 H2O. Its pathway is porphyrin-containing compound metabolism; protoporphyrin-IX biosynthesis; protoporphyrinogen-IX from coproporphyrinogen-III (O2 route): step 1/1. Functionally, involved in the heme and chlorophyll biosynthesis. Catalyzes the aerobic oxidative decarboxylation of propionate groups of rings A and B of coproporphyrinogen-III to yield the vinyl groups in protoporphyrinogen-IX. This is Oxygen-dependent coproporphyrinogen-III oxidase from Prochlorococcus marinus (strain MIT 9312).